The following is a 371-amino-acid chain: Queuine tRNA-ribosyltransferase (371 aa).

The active-site Proton acceptor is Asp-92. Residues 92–96, Asp-147, Gln-190, and Gly-217 contribute to the substrate site; that span reads DSGGF. An RNA binding region spans residues 248–254; sequence GVGKPID. Asp-267 functions as the Nucleophile in the catalytic mechanism. Positions 272–276 are RNA binding; important for wobble base 34 recognition; that stretch reads TRSGR.

This sequence belongs to the queuine tRNA-ribosyltransferase family. In terms of assembly, homodimer. Within each dimer, one monomer is responsible for RNA recognition and catalysis, while the other monomer binds to the replacement base PreQ1.

The enzyme catalyses 7-aminomethyl-7-carbaguanine + guanosine(34) in tRNA = 7-aminomethyl-7-carbaguanosine(34) in tRNA + guanine. Its pathway is tRNA modification; tRNA-queuosine biosynthesis. Functionally, catalyzes the base-exchange of a guanine (G) residue with the queuine precursor 7-aminomethyl-7-deazaguanine (PreQ1) at position 34 (anticodon wobble position) in tRNAs with GU(N) anticodons (tRNA-Asp, -Asn, -His and -Tyr). Catalysis occurs through a double-displacement mechanism. The nucleophile active site attacks the C1' of nucleotide 34 to detach the guanine base from the RNA, forming a covalent enzyme-RNA intermediate. The proton acceptor active site deprotonates the incoming PreQ1, allowing a nucleophilic attack on the C1' of the ribose to form the product. After dissociation, two additional enzymatic reactions on the tRNA convert PreQ1 to queuine (Q), resulting in the hypermodified nucleoside queuosine (7-(((4,5-cis-dihydroxy-2-cyclopenten-1-yl)amino)methyl)-7-deazaguanosine). This is Queuine tRNA-ribosyltransferase from Caulobacter vibrioides (strain ATCC 19089 / CIP 103742 / CB 15) (Caulobacter crescentus).